The sequence spans 602 residues: Elongation factor 4 (602 aa).

Residues 6–188 (DHIRNFSIVA…AIVNKLPAPK (183 aa)) enclose the tr-type G domain. GTP contacts are provided by residues 18–23 (DHGKST) and 135–138 (NKID).

The protein belongs to the TRAFAC class translation factor GTPase superfamily. Classic translation factor GTPase family. LepA subfamily.

Its subcellular location is the cell inner membrane. It catalyses the reaction GTP + H2O = GDP + phosphate + H(+). In terms of biological role, required for accurate and efficient protein synthesis under certain stress conditions. May act as a fidelity factor of the translation reaction, by catalyzing a one-codon backward translocation of tRNAs on improperly translocated ribosomes. Back-translocation proceeds from a post-translocation (POST) complex to a pre-translocation (PRE) complex, thus giving elongation factor G a second chance to translocate the tRNAs correctly. Binds to ribosomes in a GTP-dependent manner. This is Elongation factor 4 from Brucella melitensis biotype 2 (strain ATCC 23457).